Reading from the N-terminus, the 213-residue chain is MVLSTLIMRASDGLPLSASVDDGQENLSEQKKQCKLVTQKLSANSADRASIESGNYVIHYLMKDGIVYYCISESSYPRKLAFSYLDELDREFQKSHGQEALKEGVRPYKFVEFDTFMQKTKRVYQDTRATHNLDKLNTELQDVTRVMTKNIEDLLHRGHSLDHMSDLSSNLRTESKKYRRAAQRINWEAMIRQYIPFIGVGLIGLFMLWWMLF.

The Cytoplasmic portion of the chain corresponds to 1 to 192 (MVLSTLIMRA…QRINWEAMIR (192 aa)). The Longin domain occupies 6–117 (LIMRASDGLP…YKFVEFDTFM (112 aa)). Positions 132-192 (NLDKLNTELQ…QRINWEAMIR (61 aa)) constitute a v-SNARE coiled-coil homology domain. A helical; Anchor for type IV membrane protein transmembrane segment spans residues 193–213 (QYIPFIGVGLIGLFMLWWMLF).

The protein belongs to the synaptobrevin family.

Its subcellular location is the membrane. It is found in the endoplasmic reticulum membrane. It localises to the golgi apparatus membrane. Its function is as follows. Required for transport from the ER to the Golgi complex. The polypeptide is Protein transport protein SEC22 (SEC22) (Yarrowia lipolytica (strain CLIB 122 / E 150) (Yeast)).